Consider the following 431-residue polypeptide: Citrate synthase 1 (431 aa).

Active-site residues include His309 and Asp366.

This sequence belongs to the citrate synthase family. In terms of assembly, homohexamer.

It catalyses the reaction oxaloacetate + acetyl-CoA + H2O = citrate + CoA + H(+). It functions in the pathway carbohydrate metabolism; tricarboxylic acid cycle; isocitrate from oxaloacetate: step 1/2. The polypeptide is Citrate synthase 1 (gltA2) (Mycobacterium tuberculosis (strain CDC 1551 / Oshkosh)).